Reading from the N-terminus, the 425-residue chain is Probable proline--tRNA ligase, mitochondrial (425 aa).

It belongs to the class-II aminoacyl-tRNA synthetase family.

Its subcellular location is the mitochondrion. The catalysed reaction is tRNA(Pro) + L-proline + ATP = L-prolyl-tRNA(Pro) + AMP + diphosphate. The protein is Probable proline--tRNA ligase, mitochondrial of Schizosaccharomyces pombe (strain 972 / ATCC 24843) (Fission yeast).